Reading from the N-terminus, the 415-residue chain is Mitogen-activated protein kinase MPS1 (415 aa).

The 292-residue stretch at 23–314 (YTVTKELGQG…VEQALEHPYL (292 aa)) folds into the Protein kinase domain. Residues 29-37 (LGQGAYGIV) and K52 each bind ATP. Residues 363 to 394 (GAGGHGAPHAPQVPIPAGAGQGQWKAEDPRPQ) are disordered.

The protein belongs to the protein kinase superfamily. Ser/Thr protein kinase family. MAP kinase subfamily. In terms of assembly, interacts with transcription factor MIG1. Interacts with transcription factor SWI6. Requires Mg(2+) as cofactor.

It catalyses the reaction L-seryl-[protein] + ATP = O-phospho-L-seryl-[protein] + ADP + H(+). It carries out the reaction L-threonyl-[protein] + ATP = O-phospho-L-threonyl-[protein] + ADP + H(+). Its function is as follows. Mitogen-activated protein kinase; part of the MCK1-MKK2-MPS1 MAP kinase (MAPK) signal transduction cascade that is essential for cell wall integrity and plant infection, but not for plant defense responses. Beside its role in pathogenesis, the MPS1 cascade is active in conidiation and cellular stress responses. Targets downstream of the MPS1-MAPK pathway include transcription factors MIG1 and SWI6, as well as GSK1 and MPG1. This Pyricularia oryzae (strain 70-15 / ATCC MYA-4617 / FGSC 8958) (Rice blast fungus) protein is Mitogen-activated protein kinase MPS1.